The following is a 282-amino-acid chain: Phosphatidylserine decarboxylase proenzyme (282 aa).

Active-site charge relay system; for autoendoproteolytic cleavage activity residues include aspartate 85, histidine 142, and serine 244. Serine 244 acts as the Schiff-base intermediate with substrate; via pyruvic acid; for decarboxylase activity in catalysis. At serine 244 the chain carries Pyruvic acid (Ser); by autocatalysis.

This sequence belongs to the phosphatidylserine decarboxylase family. PSD-B subfamily. Prokaryotic type I sub-subfamily. Heterodimer of a large membrane-associated beta subunit and a small pyruvoyl-containing alpha subunit. It depends on pyruvate as a cofactor. Is synthesized initially as an inactive proenzyme. Formation of the active enzyme involves a self-maturation process in which the active site pyruvoyl group is generated from an internal serine residue via an autocatalytic post-translational modification. Two non-identical subunits are generated from the proenzyme in this reaction, and the pyruvate is formed at the N-terminus of the alpha chain, which is derived from the carboxyl end of the proenzyme. The autoendoproteolytic cleavage occurs by a canonical serine protease mechanism, in which the side chain hydroxyl group of the serine supplies its oxygen atom to form the C-terminus of the beta chain, while the remainder of the serine residue undergoes an oxidative deamination to produce ammonia and the pyruvoyl prosthetic group on the alpha chain. During this reaction, the Ser that is part of the protease active site of the proenzyme becomes the pyruvoyl prosthetic group, which constitutes an essential element of the active site of the mature decarboxylase.

It localises to the cell membrane. The catalysed reaction is a 1,2-diacyl-sn-glycero-3-phospho-L-serine + H(+) = a 1,2-diacyl-sn-glycero-3-phosphoethanolamine + CO2. It functions in the pathway phospholipid metabolism; phosphatidylethanolamine biosynthesis; phosphatidylethanolamine from CDP-diacylglycerol: step 2/2. Its function is as follows. Catalyzes the formation of phosphatidylethanolamine (PtdEtn) from phosphatidylserine (PtdSer). This Coxiella burnetii (strain CbuG_Q212) (Coxiella burnetii (strain Q212)) protein is Phosphatidylserine decarboxylase proenzyme.